The sequence spans 108 residues: Thiosulfate sulfurtransferase GlpE (108 aa).

The 89-residue stretch at 17 to 105 (QEKEAVLVDI…WQRQFPAEVA (89 aa)) folds into the Rhodanese domain. Residue cysteine 65 is the Cysteine persulfide intermediate of the active site.

Belongs to the GlpE family.

Its subcellular location is the cytoplasm. It catalyses the reaction thiosulfate + hydrogen cyanide = thiocyanate + sulfite + 2 H(+). The catalysed reaction is thiosulfate + [thioredoxin]-dithiol = [thioredoxin]-disulfide + hydrogen sulfide + sulfite + 2 H(+). Transferase that catalyzes the transfer of sulfur from thiosulfate to thiophilic acceptors such as cyanide or dithiols. May function in a CysM-independent thiosulfate assimilation pathway by catalyzing the conversion of thiosulfate to sulfite, which can then be used for L-cysteine biosynthesis. This Shigella dysenteriae serotype 1 (strain Sd197) protein is Thiosulfate sulfurtransferase GlpE.